The following is a 211-amino-acid chain: Cytochrome c biogenesis ATP-binding export protein CcmA (211 aa).

Residues 6–211 (LQTVALACER…RDIDLGNWAV (206 aa)) form the ABC transporter domain. 38–45 (GPNGSGKT) lines the ATP pocket.

This sequence belongs to the ABC transporter superfamily. CcmA exporter (TC 3.A.1.107) family. In terms of assembly, the complex is composed of two ATP-binding proteins (CcmA) and two transmembrane proteins (CcmB).

It localises to the cell inner membrane. It catalyses the reaction heme b(in) + ATP + H2O = heme b(out) + ADP + phosphate + H(+). Part of the ABC transporter complex CcmAB involved in the biogenesis of c-type cytochromes; once thought to export heme, this seems not to be the case, but its exact role is uncertain. Responsible for energy coupling to the transport system. This chain is Cytochrome c biogenesis ATP-binding export protein CcmA, found in Pseudomonas fluorescens (strain Pf0-1).